The following is a 395-amino-acid chain: Neuromedin-U receptor 2 (395 aa).

Over M1 to S41 the chain is Extracellular. N-linked (GlcNAc...) asparagine glycosylation is found at N6 and N19. A helical transmembrane segment spans residues V42–I62. At A63–Y74 the chain is on the cytoplasmic side. The helical transmembrane segment at Y75–V95 threads the bilayer. Topologically, residues Y96 to T115 are extracellular. C111 and C196 form a disulfide bridge. A helical membrane pass occupies residues A116–V138. At A139–R157 the chain is on the cytoplasmic side. A helical transmembrane segment spans residues I158–G178. The Extracellular portion of the chain corresponds to I179–T212. The N-linked (GlcNAc...) asparagine glycan is linked to N186. Residues S213 to L233 traverse the membrane as a helical segment. Residues R234–S257 are Cytoplasmic-facing. A helical membrane pass occupies residues V258–V278. At D279 to L293 the chain is on the extracellular side. Residues A294–V314 form a helical membrane-spanning segment. The Cytoplasmic segment spans residues N315–P395.

Belongs to the G-protein coupled receptor 1 family. Expressed primarily in brain tissues, more specifically in medulla and spinal cord. Widespread distribution in peripheral tissues.

The protein localises to the cell membrane. Receptor for the neuromedin-U and neuromedin-S neuropeptides. The protein is Neuromedin-U receptor 2 (Nmur2) of Mus musculus (Mouse).